The following is a 218-amino-acid chain: Small ribosomal subunit protein uS3c (218 aa).

The KH type-2 domain occupies 47–118 (VRRHMKNYSN…KLNISIAKVA (72 aa)).

The protein belongs to the universal ribosomal protein uS3 family. In terms of assembly, part of the 30S ribosomal subunit.

Its subcellular location is the plastid. It is found in the chloroplast. The sequence is that of Small ribosomal subunit protein uS3c (rps3) from Ginkgo biloba (Ginkgo).